Here is a 300-residue protein sequence, read N- to C-terminus: Ribosomal protein L11 methyltransferase (300 aa).

Positions 152, 173, 195, and 234 each coordinate S-adenosyl-L-methionine.

Belongs to the methyltransferase superfamily. PrmA family.

Its subcellular location is the cytoplasm. The catalysed reaction is L-lysyl-[protein] + 3 S-adenosyl-L-methionine = N(6),N(6),N(6)-trimethyl-L-lysyl-[protein] + 3 S-adenosyl-L-homocysteine + 3 H(+). Functionally, methylates ribosomal protein L11. The protein is Ribosomal protein L11 methyltransferase of Burkholderia cenocepacia (strain ATCC BAA-245 / DSM 16553 / LMG 16656 / NCTC 13227 / J2315 / CF5610) (Burkholderia cepacia (strain J2315)).